We begin with the raw amino-acid sequence, 132 residues long: ATP synthase epsilon chain (132 aa).

Belongs to the ATPase epsilon chain family. In terms of assembly, F-type ATPases have 2 components, CF(1) - the catalytic core - and CF(0) - the membrane proton channel. CF(1) has five subunits: alpha(3), beta(3), gamma(1), delta(1), epsilon(1). CF(0) has three main subunits: a, b and c.

It localises to the cell membrane. In terms of biological role, produces ATP from ADP in the presence of a proton gradient across the membrane. The polypeptide is ATP synthase epsilon chain (Brevibacillus brevis (strain 47 / JCM 6285 / NBRC 100599)).